The following is a 148-amino-acid chain: Large ribosomal subunit protein bL9 (148 aa).

It belongs to the bacterial ribosomal protein bL9 family.

Functionally, binds to the 23S rRNA. The chain is Large ribosomal subunit protein bL9 from Bifidobacterium adolescentis (strain ATCC 15703 / DSM 20083 / NCTC 11814 / E194a).